We begin with the raw amino-acid sequence, 321 residues long: Mitochondrial coenzyme A transporter SLC25A42 (321 aa).

Solcar repeat units lie at residues 33 to 119, 131 to 216, and 226 to 314; these read RSVL…YKGI, LPPV…LKKT, and PFPY…TQIL. 6 consecutive transmembrane segments (helical) span residues 35-55, 91-111, 137-154, 191-208, 232-252, and 295-315; these read VLNSLVSGAFAGAVAKTAVAP, LWRGNSATMVRVIPYAAIQFC, LLAGSLAGTTAAIITYPL, GFTPTILGVVPYAGLSFF, LVFGACAGLIGQSASYPLDVV, and VKGPIAVGISFMTFDLTQILL.

This sequence belongs to the mitochondrial carrier (TC 2.A.29) family.

The protein localises to the mitochondrion inner membrane. The enzyme catalyses ADP(out) + CoA(in) = ADP(in) + CoA(out). The catalysed reaction is 3'-dephospho-CoA(in) + ADP(out) = 3'-dephospho-CoA(out) + ADP(in). It carries out the reaction adenosine 3',5'-bisphosphate(in) + ADP(out) = adenosine 3',5'-bisphosphate(out) + ADP(in). It catalyses the reaction AMP(in) + ADP(out) = AMP(out) + ADP(in). The enzyme catalyses dADP(in) + ADP(out) = dADP(out) + ADP(in). The catalysed reaction is ADP(in) + ATP(out) = ADP(out) + ATP(in). Mitochondrial carrier mediating the transport of coenzyme A (CoA) in mitochondria in exchange for intramitochondrial (deoxy)adenine nucleotides and adenosine 3',5'-diphosphate. This chain is Mitochondrial coenzyme A transporter SLC25A42 (slc25a42), found in Danio rerio (Zebrafish).